The chain runs to 150 residues: Urease accessory protein UreE (150 aa).

It belongs to the UreE family.

The protein localises to the cytoplasm. Its function is as follows. Involved in urease metallocenter assembly. Binds nickel. Probably functions as a nickel donor during metallocenter assembly. In Streptococcus salivarius (strain 57.I), this protein is Urease accessory protein UreE.